The chain runs to 143 residues: Cytochrome c-type biogenesis protein CcmE (143 aa).

The Cytoplasmic segment spans residues 1–8 (MNPVRRRK). Residues 9 to 29 (LFILLFALTILSAAAALVLYA) traverse the membrane as a helical; Signal-anchor for type II membrane protein segment. Residues 30-143 (LRQNISLFYT…KSALADKVKQ (114 aa)) are Periplasmic-facing. H124 and Y128 together coordinate heme.

The protein belongs to the CcmE/CycJ family.

Its subcellular location is the cell inner membrane. Functionally, heme chaperone required for the biogenesis of c-type cytochromes. Transiently binds heme delivered by CcmC and transfers the heme to apo-cytochromes in a process facilitated by CcmF and CcmH. The protein is Cytochrome c-type biogenesis protein CcmE of Legionella pneumophila (strain Corby).